A 419-amino-acid chain; its full sequence is Gamma-glutamyl phosphate reductase (419 aa).

It belongs to the gamma-glutamyl phosphate reductase family.

It is found in the cytoplasm. The catalysed reaction is L-glutamate 5-semialdehyde + phosphate + NADP(+) = L-glutamyl 5-phosphate + NADPH + H(+). The protein operates within amino-acid biosynthesis; L-proline biosynthesis; L-glutamate 5-semialdehyde from L-glutamate: step 2/2. In terms of biological role, catalyzes the NADPH-dependent reduction of L-glutamate 5-phosphate into L-glutamate 5-semialdehyde and phosphate. The product spontaneously undergoes cyclization to form 1-pyrroline-5-carboxylate. The polypeptide is Gamma-glutamyl phosphate reductase (Azobacteroides pseudotrichonymphae genomovar. CFP2).